Here is a 780-residue protein sequence, read N- to C-terminus: Striatin (780 aa).

The stretch at 53–120 (LHFLQHEWAR…QERAKYHKLK (68 aa)) forms a coiled coil. The interval 55–63 (FLQHEWARF) is caveolin-binding. The tract at residues 123–150 (TELNQGDMKPPSYDSDEGNETEVQPQQN) is disordered. A Phosphoserine modification is found at Ser137. The tract at residues 149 to 166 (QNSQLMWKQGRQLLRQYL) is calmodulin-binding. Thr225 is subject to Phosphothreonine. Phosphoserine occurs at positions 227, 229, 245, and 259. Disordered regions lie at residues 289 to 312 (DFLVTSEEGDNESRSAGDGTDWEK), 334 to 353 (EQYKKERKGKKGVKRPNRSK), and 364 to 392 (VDELPSLQPSVGSPSRPSSSRLPEQELSR). Positions 299-312 (NESRSAGDGTDWEK) are enriched in basic and acidic residues. Positions 338 to 351 (KERKGKKGVKRPNR) are enriched in basic residues. WD repeat units follow at residues 461-500 (SHFDGIRALAFHPIEPVLITASEDHTLKMWNLQKTAPAKK), 514-553 (AHKGPVLCVVMSSNGEQCYSGGTDGRIQSWSTTNPNVDPY), 567-606 (GHTDAVWGLAYSAAHQRLLSCSADGTLRLWNTTEVAPALS), 662-701 (SSSCQINRVISHPTLPISITAHEDRHIKFYDNNTGKLIHS), 704-743 (AHLEAVTSLAVDPNGLYLMSGSHDCSIRLWNLESKTCIQE), and 750-780 (KFEESIHDVAFHPSKCYIASAGADALAKVFV).

Belongs to the WD repeat striatin family. In terms of assembly, part of the core of STRIPAK complexes composed of PP2A catalytic and scaffolding subunits, the striatins (PP2A regulatory subunits), the striatin-associated proteins MOB4, STRIP1 and STRIP2, PDCD10 and members of the STE20 kinases, such as STK24 and STK26. Interacts with CTTNBP2; this interaction may regulate dendritic spine distribution of STRN. Activation of glutamate receptors weakens the interaction with CTTNBP2. Mainly expressed in brain but is also expressed at low levels in various tissues such as kidney, spleen, skeletal muscle and lung.

The protein localises to the cytoplasm. It localises to the membrane. The protein resides in the cell projection. It is found in the dendritic spine. In terms of biological role, calmodulin-binding scaffolding protein which is the center of the striatin-interacting phosphatase and kinase (STRIPAK) complexes. STRIPAK complexes have critical roles in protein (de)phosphorylation and are regulators of multiple signaling pathways including Hippo, MAPK, nuclear receptor and cytoskeleton remodeling. Different types of STRIPAK complexes are involved in a variety of biological processes such as cell growth, differentiation, apoptosis, metabolism and immune regulation. The protein is Striatin (Strn) of Mus musculus (Mouse).